We begin with the raw amino-acid sequence, 173 residues long: Regulator of ribonuclease activity A (173 aa).

The protein belongs to the RraA family. Homotrimer. Binds to both RNA-binding sites in the C-terminal region of Rne and to RhlB.

It is found in the cytoplasm. Its function is as follows. Globally modulates RNA abundance by binding to RNase E (Rne) and regulating its endonucleolytic activity. Can modulate Rne action in a substrate-dependent manner by altering the composition of the degradosome. Modulates RNA-binding and helicase activities of the degradosome. The polypeptide is Regulator of ribonuclease activity A (Vibrio vulnificus (strain CMCP6)).